A 1146-amino-acid chain; its full sequence is Inositol hexakisphosphate and diphosphoinositol-pentakisphosphate kinase (1146 aa).

Positions 1 to 33 (MSGIKKEPIESDEVPQQETKNNLPSAPSEMSPL) are disordered. Positions 16–25 (QQETKNNLPS) are enriched in polar residues. Ser31, Ser54, and Ser77 each carry phosphoserine. The tract at residues 93 to 185 (TALGNGNNTN…STSHPKPRLP (93 aa)) is disordered. Positions 96-106 (GNGNNTNTVTT) are enriched in low complexity. The segment covering 110-120 (KKADSESKSEA) has biased composition (basic and acidic residues). Over residues 125–144 (LSNSNIVNDADNINSISKTG) the composition is skewed to polar residues. Positions 164–178 (SVPTSSASSRKSSTS) are enriched in low complexity. 197–198 (AK) is a binding site for substrate. ATP-binding positions include Arg278, Lys351, His358, Arg377, 402 to 405 (EQFM), and 412 to 414 (DVK). 377–378 (RK) serves as a coordination point for substrate. The substrate site is built by Lys414 and Arg428. Residues Ser430, Asp475, and 487–489 (DVN) each bind ATP. 492–495 (SFVK) contributes to the substrate binding site. The segment at 530–597 (REEKEQKWVF…VLQALRIALD (68 aa)) is polyphosphoinositide-binding domain. Phosphoserine occurs at positions 895 and 1107. The tract at residues 1106 to 1146 (TSPNLSFQKRKTRRKSVSVEKLKRPASSGSSSSTSVNKTLD) is disordered.

It belongs to the histidine acid phosphatase family. VIP1 subfamily.

Its subcellular location is the cytoplasm. The protein localises to the cytoskeleton. The enzyme catalyses 1D-myo-inositol hexakisphosphate + ATP = 1-diphospho-1D-myo-inositol 2,3,4,5,6-pentakisphosphate + ADP. It carries out the reaction 5-diphospho-1D-myo-inositol 1,2,3,4,6-pentakisphosphate + ATP + H(+) = 1,5-bis(diphospho)-1D-myo-inositol 2,3,4,6-tetrakisphosphate + ADP. Functionally, bifunctional inositol kinase that acts in concert with the IP6K kinases to synthesize the diphosphate group-containing inositol pyrophosphates diphosphoinositol pentakisphosphate, PP-InsP5, and bis-diphosphoinositol tetrakisphosphate, (PP)2-InsP4. Phosphorylates inositol hexakisphosphate (InsP6) at position 1 to produce PP-InsP5 which is in turn phosphorylated by IP6Ks to produce (PP)2-InsP4. Alternatively, phosphorylates PP-InsP5 at position 1, produced by IP6Ks from InsP6, to produce (PP)2-InsP4. Required for maintaining cellular integrity, normal growth and interactions with the ARP complex. Acts as a regulator of the PHO80-PHO85 cyclin/cyclin-dependent kinase (CDK) complex, thereby regulating signaling of phosphate availability. Required for the function of the cortical actin cytoskeleton, possibly by participating in correct F-actin localization and ensuring polarized growth. Regulates polarized growth and modulates interphase microtubule cytoskeleton. Regulates microtubule dynamics without the requirement of microtubule plus-end tracking protein Mal3. Required for growth zone selection. The polypeptide is Inositol hexakisphosphate and diphosphoinositol-pentakisphosphate kinase (Saccharomyces cerevisiae (strain ATCC 204508 / S288c) (Baker's yeast)).